The primary structure comprises 231 residues: Hypoxanthine-guanine-xanthine phosphoribosyltransferase (231 aa).

GMP is bound by residues Lys-77, 144-152 (EDIIDTGKT), Lys-176, and Asp-204. The active-site Proton acceptor is Asp-148. Asp-204 lines the Mg(2+) pocket.

Belongs to the purine/pyrimidine phosphoribosyltransferase family. As to quaternary structure, homotetramer. Requires Mg(2+) as cofactor.

The protein localises to the cytoplasm. The catalysed reaction is IMP + diphosphate = hypoxanthine + 5-phospho-alpha-D-ribose 1-diphosphate. It carries out the reaction GMP + diphosphate = guanine + 5-phospho-alpha-D-ribose 1-diphosphate. It catalyses the reaction XMP + diphosphate = xanthine + 5-phospho-alpha-D-ribose 1-diphosphate. It participates in purine metabolism; GMP biosynthesis via salvage pathway; GMP from guanine: step 1/1. The protein operates within purine metabolism; IMP biosynthesis via salvage pathway; IMP from hypoxanthine: step 1/1. It functions in the pathway purine metabolism; XMP biosynthesis via salvage pathway; XMP from xanthine: step 1/1. Its function is as follows. Catalyzes the transfer of a ribosyl phosphate group from 5-phosphoribose 1-diphosphate to the N(9) of hypoxanthine, guanine or xanthine, leading to IMP, GMP and XMP, respectively. Plays a central role in the generation of purine nucleotides through the purine salvage pathway. The polypeptide is Hypoxanthine-guanine-xanthine phosphoribosyltransferase (LACZ) (Plasmodium falciparum (isolate K1 / Thailand)).